Consider the following 321-residue polypeptide: Carnitine monooxygenase reductase subunit (321 aa).

One can recognise an FAD-binding FR-type domain in the interval 4–109; that stretch reads YQMFEVQVSQ…STPNNLFALI (106 aa). One can recognise a 2Fe-2S ferredoxin-type domain in the interval 233–321; the sequence is DAFTLVLARS…AKGKRLVLDL (89 aa). Cys270, Cys275, Cys278, and Cys308 together coordinate [2Fe-2S] cluster.

It belongs to the PDR/VanB family. CntB subfamily. Composed of an oxygenase subunit (yeaW) and a reductase subunit (yeaX). FMN is required as a cofactor. It depends on [2Fe-2S] cluster as a cofactor.

The catalysed reaction is (R)-carnitine + NADH + O2 + H(+) = (3R)-3-hydroxy-4-oxobutanoate + trimethylamine + NAD(+) + H2O. The enzyme catalyses (R)-carnitine + NADPH + O2 + H(+) = (3R)-3-hydroxy-4-oxobutanoate + trimethylamine + NADP(+) + H2O. Its pathway is amine and polyamine metabolism; carnitine metabolism. Its function is as follows. Converts carnitine to trimethylamine and malic semialdehyde. Can also use gamma-butyrobetaine, choline and betaine as substrates. This chain is Carnitine monooxygenase reductase subunit (yeaX), found in Escherichia coli (strain K12).